A 561-amino-acid polypeptide reads, in one-letter code: 2-succinyl-5-enolpyruvyl-6-hydroxy-3-cyclohexene-1-carboxylate synthase (561 aa).

This sequence belongs to the TPP enzyme family. MenD subfamily. As to quaternary structure, homodimer. It depends on Mg(2+) as a cofactor. Mn(2+) serves as cofactor. Requires thiamine diphosphate as cofactor.

It catalyses the reaction isochorismate + 2-oxoglutarate + H(+) = 5-enolpyruvoyl-6-hydroxy-2-succinyl-cyclohex-3-ene-1-carboxylate + CO2. The protein operates within quinol/quinone metabolism; 1,4-dihydroxy-2-naphthoate biosynthesis; 1,4-dihydroxy-2-naphthoate from chorismate: step 2/7. Its pathway is quinol/quinone metabolism; menaquinone biosynthesis. In terms of biological role, catalyzes the thiamine diphosphate-dependent decarboxylation of 2-oxoglutarate and the subsequent addition of the resulting succinic semialdehyde-thiamine pyrophosphate anion to isochorismate to yield 2-succinyl-5-enolpyruvyl-6-hydroxy-3-cyclohexene-1-carboxylate (SEPHCHC). The polypeptide is 2-succinyl-5-enolpyruvyl-6-hydroxy-3-cyclohexene-1-carboxylate synthase (Proteus mirabilis (strain HI4320)).